A 166-amino-acid polypeptide reads, in one-letter code: MLSKDLLEALNDQMNHEYFAAHAYMAMAAYCDDASYEGFANFYIQQAKEERFHGKKIYDYINDRGEHAEFKSIPAPKTEFKSILETFKDGLAQEQDVTRRFYNLSEIAQKDKDYATISFLNWFLDEQVEEESTFETHIDYLNRIGDDCNTLYLYEKELAARSFDEE.

Positions 2–145 (LSKDLLEALN…THIDYLNRIG (144 aa)) constitute a Ferritin-like diiron domain. Positions 17, 50, 53, 94, and 127 each coordinate Fe cation.

This sequence belongs to the ferritin family. Prokaryotic subfamily.

Its subcellular location is the cytoplasm. The catalysed reaction is 4 Fe(2+) + O2 + 6 H2O = 4 iron(III) oxide-hydroxide + 12 H(+). Iron-storage protein. The chain is Bacterial non-heme ferritin (ftnA) from Staphylococcus haemolyticus (strain JCSC1435).